We begin with the raw amino-acid sequence, 494 residues long: Protein translocase subunit SecD (494 aa).

6 helical membrane passes run tryptophan 7 to phenylalanine 27, leucine 322 to leucine 342, phenylalanine 345 to isoleucine 365, proline 372 to phenylalanine 392, isoleucine 420 to glycine 440, and phenylalanine 441 to leucine 461.

This sequence belongs to the SecD/SecF family. SecD subfamily. Forms a complex with SecF. Part of the essential Sec protein translocation apparatus which comprises SecA, SecYEG and auxiliary proteins SecDF. Other proteins may also be involved.

It is found in the cell inner membrane. In terms of biological role, part of the Sec protein translocase complex. Interacts with the SecYEG preprotein conducting channel. SecDF uses the proton motive force (PMF) to complete protein translocation after the ATP-dependent function of SecA. Functionally, probably participates in protein translocation into and across both the cytoplasmic and thylakoid membranes in cyanobacterial cells. The protein is Protein translocase subunit SecD of Prochlorococcus marinus (strain SARG / CCMP1375 / SS120).